We begin with the raw amino-acid sequence, 620 residues long: MSKSKCSVGLMSSVVAPAKEPNAMGPKEVELILVKEQNGVQLTSSTLTNPRQSPVEAQDRETWGKKIDFLLSVIGFAVDLANVWRFPYLCYKNGGGAFLVPYLLFMVIAGMPLFYMELALGQFNREGAAGVWKICPVLKGVGFTVILISLYVGFFYNVIIAWALHYLFSSFTTELPWIHCNNSWNSPNCSDAHSGDSGGNGPGLNDTFGTTPAAEYFERGVLHLHQSHGIDDLGPPRWQLTACLVLVIVLLYFSLWKGVKTSGKVVWITATMPYVVLTALLLRGVTLPGAIDGIRAYLSVDFYRLCEASVWIDAATQVCFSLGVGFGVLIAFSSYNKFTNNCYRDAIVTTSINSLTSFSSGFVVFSFLGYMAQKHSVPIGDVAKDGPGLIFIIYPEAIATLPLSSAWAVVFFIMLLTLGIDSAMGGMESVITGLIDEFQLLHRHRELFTLFIVLATFLLSLFCVTNGGIYVFTLLDHFAAGTSILFGVLIEAIGVAWFYGVGQFSDDIQQMTGQRPSLYWRLCWKLVSPCFLLFVVVVSIVTFRPPHYGAYIFPDWANALGWVIATSSMAMVPIYAAYKFCSLPGSFREKLAYAIAPEKDRELVDRGEVRQFTLRHWLKV.

Topologically, residues 1 to 56 (MSKSKCSVGLMSSVVAPAKEPNAMGPKEVELILVKEQNGVQLTSSTLTNPRQSPVE) are cytoplasmic. The chain crosses the membrane as a discontinuously helical span at residues 57 to 95 (AQDRETWGKKIDFLLSVIGFAVDLANVWRFPYLCYKNGG). The Na(+) site is built by G75, A77, V78, D79, and N82. Position 79 (D79) interacts with dopamine. Helical transmembrane passes span 96–127 (GAFL…NREG) and 128–171 (AAGV…FSSF). Dopamine-binding residues include S149 and G153. Residues 172-236 (TTELPWIHCN…SHGIDDLGPP (65 aa)) are Extracellular-facing. The cysteines at positions 180 and 189 are disulfide-linked. 3 N-linked (GlcNAc...) asparagine glycosylation sites follow: N181, N188, and N205. A run of 2 helical transmembrane segments spans residues 237–256 (RWQL…FSLW) and 257–287 (KGVK…GVTL). At 288–306 (PGAIDGIRAYLSVDFYRLC) the chain is on the extracellular side. The chain crosses the membrane as a discontinuously helical span at residues 307–335 (EASVWIDAATQVCFSLGVGFGVLIAFSSY). Q317 is a chloride binding site. Residue F320 participates in dopamine binding. Residues S321 and N353 each coordinate Na(+). S321 lines the chloride pocket. Residues 336–376 (NKFTNNCYRDAIVTTSINSLTSFSSGFVVFSFLGYMAQKHS) traverse the membrane as a helical segment. S357 contacts chloride. Residues 377–400 (VPIGDVAKDGPGLIFIIYPEAIAT) are Extracellular-facing. Transmembrane regions (helical) follow at residues 401-442 (LPLS…QLLH), 443-466 (RHRE…CVTN), and 467-499 (GGIY…AWFY). Positions 418, 421, and 422 each coordinate Na(+). S422 and A423 together coordinate dopamine. The Cytoplasmic segment spans residues 500–516 (GVGQFSDDIQQMTGQRP). Residues 517-542 (SLYWRLCWKLVSPCFLLFVVVVSIVT) traverse the membrane as a helical segment. At 543-553 (FRPPHYGAYIF) the chain is on the extracellular side. The helical transmembrane segment at 554 to 583 (PDWANALGWVIATSSMAMVPIYAAYKFCSL) threads the bilayer. Residues 561 to 590 (GWVIATSSMAMVPIYAAYKFCSLPGSFREK) form an interaction with TGFB1I1 region. Residues 584 to 620 (PGSFREKLAYAIAPEKDRELVDRGEVRQFTLRHWLKV) lie on the Cytoplasmic side of the membrane.

It belongs to the sodium:neurotransmitter symporter (SNF) (TC 2.A.22) family. SLC6A3 subfamily. As to quaternary structure, monomer. Homooligomer; disulfide-linked. Interacts with PRKCABP and TGFB1I1. Interacts (via N-terminus) with SYNGR3 (via N-terminus). Interacts with SLC18A2. Interacts with TOR1A (ATP-bound); TOR1A regulates SLC6A3 subcellular location. Interacts with alpha-synuclein/SNCA. Interacts with SEPTIN4.

It is found in the cell membrane. Its subcellular location is the cell projection. The protein localises to the neuron projection. It localises to the axon. It catalyses the reaction dopamine(out) + chloride(out) + Na(+)(out) = dopamine(in) + chloride(in) + Na(+)(in). The catalysed reaction is (R)-noradrenaline(out) + chloride(out) + Na(+)(out) = (R)-noradrenaline(in) + chloride(in) + Na(+)(in). It carries out the reaction dopamine(out) + chloride(out) + 2 Na(+)(out) = dopamine(in) + chloride(in) + 2 Na(+)(in). Its activity is regulated as follows. Inhibited by zinc ions. In terms of biological role, mediates sodium- and chloride-dependent transport of dopamine. Also mediates sodium- and chloride-dependent transport of norepinephrine (also known as noradrenaline). Regulator of light-dependent retinal hyaloid vessel regression, downstream of OPN5 signaling. The polypeptide is Sodium-dependent dopamine transporter (SLC6A3) (Macaca fascicularis (Crab-eating macaque)).